The sequence spans 83 residues: Short neurotoxin OKI-01/OKI-19 (83 aa).

Residues 1 to 21 (MKTLLLTLVVVTIVCLDLGYT) form the signal peptide. Disulfide bonds link Cys-24/Cys-45, Cys-38/Cys-62, Cys-64/Cys-75, and Cys-76/Cys-81.

Belongs to the three-finger toxin family. Short-chain subfamily. Type I alpha-neurotoxin sub-subfamily. In terms of tissue distribution, expressed by the venom gland.

The protein resides in the secreted. In terms of biological role, binds to muscle nicotinic acetylcholine receptor (nAChR) and inhibit acetylcholine from binding to the receptor, thereby impairing neuromuscular transmission. This chain is Short neurotoxin OKI-01/OKI-19, found in Laticauda laticaudata (Blue-ringed sea krait).